Here is a 361-residue protein sequence, read N- to C-terminus: Phosphoserine aminotransferase (361 aa).

Arg43 is an L-glutamate binding site. Residues 77-78 (AS), Trp103, Thr153, Asp173, and Gln196 each bind pyridoxal 5'-phosphate. An N6-(pyridoxal phosphate)lysine modification is found at Lys197. 238–239 (NT) serves as a coordination point for pyridoxal 5'-phosphate.

Belongs to the class-V pyridoxal-phosphate-dependent aminotransferase family. SerC subfamily. Homodimer. Requires pyridoxal 5'-phosphate as cofactor.

The protein resides in the cytoplasm. It carries out the reaction O-phospho-L-serine + 2-oxoglutarate = 3-phosphooxypyruvate + L-glutamate. The catalysed reaction is 4-(phosphooxy)-L-threonine + 2-oxoglutarate = (R)-3-hydroxy-2-oxo-4-phosphooxybutanoate + L-glutamate. It functions in the pathway amino-acid biosynthesis; L-serine biosynthesis; L-serine from 3-phospho-D-glycerate: step 2/3. It participates in cofactor biosynthesis; pyridoxine 5'-phosphate biosynthesis; pyridoxine 5'-phosphate from D-erythrose 4-phosphate: step 3/5. In terms of biological role, catalyzes the reversible conversion of 3-phosphohydroxypyruvate to phosphoserine and of 3-hydroxy-2-oxo-4-phosphonooxybutanoate to phosphohydroxythreonine. In Pseudomonas putida (strain ATCC 47054 / DSM 6125 / CFBP 8728 / NCIMB 11950 / KT2440), this protein is Phosphoserine aminotransferase.